The following is a 459-amino-acid chain: Glycosyl hydrolase family 109 protein (459 aa).

The segment at residues 1-31 is a signal peptide (tat-type signal); it reads MHNIHRRHFLKAAGAVTAGLITANITASTHA. NAD(+) contacts are provided by residues 64-65, D86, 135-138, 155-156, and N184; these read ER, WEWH, and EV. Substrate is bound by residues Y213, R232, 244–247, and Y326; that span reads YPTH. Y244 contacts NAD(+).

It belongs to the Gfo/Idh/MocA family. Glycosyl hydrolase 109 subfamily. Requires NAD(+) as cofactor. Predicted to be exported by the Tat system. The position of the signal peptide cleavage has not been experimentally proven.

Glycosidase. The sequence is that of Glycosyl hydrolase family 109 protein from Shewanella sp. (strain W3-18-1).